We begin with the raw amino-acid sequence, 195 residues long: Protein GrpE (195 aa).

Positions Met1–Lys60 are disordered. Basic and acidic residues predominate over residues Gly37 to Lys60.

It belongs to the GrpE family. In terms of assembly, homodimer.

Its subcellular location is the cytoplasm. Participates actively in the response to hyperosmotic and heat shock by preventing the aggregation of stress-denatured proteins, in association with DnaK and GrpE. It is the nucleotide exchange factor for DnaK and may function as a thermosensor. Unfolded proteins bind initially to DnaJ; upon interaction with the DnaJ-bound protein, DnaK hydrolyzes its bound ATP, resulting in the formation of a stable complex. GrpE releases ADP from DnaK; ATP binding to DnaK triggers the release of the substrate protein, thus completing the reaction cycle. Several rounds of ATP-dependent interactions between DnaJ, DnaK and GrpE are required for fully efficient folding. This is Protein GrpE from Limosilactobacillus fermentum (strain NBRC 3956 / LMG 18251) (Lactobacillus fermentum).